The chain runs to 305 residues: tRNA dimethylallyltransferase (305 aa).

An ATP-binding site is contributed by G9–T16. Residue T11 to T16 participates in substrate binding. Interaction with substrate tRNA regions lie at residues D34 to Q37 and Q158 to R162.

Belongs to the IPP transferase family. Monomer. Mg(2+) serves as cofactor.

It catalyses the reaction adenosine(37) in tRNA + dimethylallyl diphosphate = N(6)-dimethylallyladenosine(37) in tRNA + diphosphate. Its function is as follows. Catalyzes the transfer of a dimethylallyl group onto the adenine at position 37 in tRNAs that read codons beginning with uridine, leading to the formation of N6-(dimethylallyl)adenosine (i(6)A). This chain is tRNA dimethylallyltransferase, found in Oleidesulfovibrio alaskensis (strain ATCC BAA-1058 / DSM 17464 / G20) (Desulfovibrio alaskensis).